We begin with the raw amino-acid sequence, 150 residues long: Cytochrome c oxidase subunit 5A, mitochondrial (150 aa).

Residues 1-41 constitute a mitochondrion transit peptide; sequence MLGAALRRCAVAATTWAGPRGLLHSARTPGPAAAIQSVRCY. The SIFI-degron motif lies at 2–20; the sequence is LGAALRRCAVAATTWAGPR. Residues K87 and K113 each carry the N6-acetyllysine modification. Phosphothreonine is present on T141.

Belongs to the cytochrome c oxidase subunit 5A family. As to quaternary structure, component of the cytochrome c oxidase (complex IV, CIV), a multisubunit enzyme composed of 14 subunits. The complex is composed of a catalytic core of 3 subunits MT-CO1, MT-CO2 and MT-CO3, encoded in the mitochondrial DNA, and 11 supernumerary subunits COX4I, COX5A, COX5B, COX6A, COX6B, COX6C, COX7A, COX7B, COX7C, COX8 and NDUFA4, which are encoded in the nuclear genome. The complex exists as a monomer or a dimer and forms supercomplexes (SCs) in the inner mitochondrial membrane with NADH-ubiquinone oxidoreductase (complex I, CI) and ubiquinol-cytochrome c oxidoreductase (cytochrome b-c1 complex, complex III, CIII), resulting in different assemblies (supercomplex SCI(1)III(2)IV(1) and megacomplex MCI(2)III(2)IV(2)). Interacts with AFG1L. Interacts with RAB5IF. Post-translationally, in response to mitochondrial stress, the precursor protein is ubiquitinated by the SIFI complex in the cytoplasm before mitochondrial import, leading to its degradation. Within the SIFI complex, UBR4 initiates ubiquitin chain that are further elongated or branched by KCMF1.

It localises to the mitochondrion inner membrane. Its pathway is energy metabolism; oxidative phosphorylation. Component of the cytochrome c oxidase, the last enzyme in the mitochondrial electron transport chain which drives oxidative phosphorylation. The respiratory chain contains 3 multisubunit complexes succinate dehydrogenase (complex II, CII), ubiquinol-cytochrome c oxidoreductase (cytochrome b-c1 complex, complex III, CIII) and cytochrome c oxidase (complex IV, CIV), that cooperate to transfer electrons derived from NADH and succinate to molecular oxygen, creating an electrochemical gradient over the inner membrane that drives transmembrane transport and the ATP synthase. Cytochrome c oxidase is the component of the respiratory chain that catalyzes the reduction of oxygen to water. Electrons originating from reduced cytochrome c in the intermembrane space (IMS) are transferred via the dinuclear copper A center (CU(A)) of subunit 2 and heme A of subunit 1 to the active site in subunit 1, a binuclear center (BNC) formed by heme A3 and copper B (CU(B)). The BNC reduces molecular oxygen to 2 water molecules using 4 electrons from cytochrome c in the IMS and 4 protons from the mitochondrial matrix. The sequence is that of Cytochrome c oxidase subunit 5A, mitochondrial (COX5A) from Macaca mulatta (Rhesus macaque).